Here is a 218-residue protein sequence, read N- to C-terminus: Small ribosomal subunit protein uS3 (218 aa).

The region spanning 38–106 is the KH type-2 domain; sequence IREYISKRLQ…RVHINIVEIK (69 aa).

Belongs to the universal ribosomal protein uS3 family. In terms of assembly, part of the 30S ribosomal subunit. Forms a tight complex with proteins S10 and S14.

Binds the lower part of the 30S subunit head. Binds mRNA in the 70S ribosome, positioning it for translation. The sequence is that of Small ribosomal subunit protein uS3 from Geobacillus kaustophilus (strain HTA426).